The sequence spans 328 residues: Putative GDP-L-fucose synthase 2 (328 aa).

Position 2 is an N-acetylalanine (Ala2). 26–32 is a binding site for NADP(+); it reads GHRGLVG. Catalysis depends on Tyr152, which acts as the Proton donor/acceptor. NADP(+)-binding positions include Lys156, 179-182, and His195; that span reads PTNL. Arg203, Trp218, Arg225, and Asp285 together coordinate substrate.

The protein belongs to the NAD(P)-dependent epimerase/dehydratase family. Fucose synthase subfamily. Homodimer.

It carries out the reaction GDP-beta-L-fucose + NADP(+) = GDP-4-dehydro-alpha-D-rhamnose + NADPH + H(+). Its pathway is nucleotide-sugar biosynthesis; GDP-L-fucose biosynthesis via de novo pathway; GDP-L-fucose from GDP-alpha-D-mannose: step 2/2. Its function is as follows. Catalyzes the two-step NADP-dependent conversion of GDP-4-dehydro-6-deoxy-D-mannose to GDP-fucose, involving an epimerase and a reductase reaction. The polypeptide is Putative GDP-L-fucose synthase 2 (GER2) (Arabidopsis thaliana (Mouse-ear cress)).